The primary structure comprises 149 residues: Calmodulin (149 aa).

The residue at position 2 (Ala2) is an N-acetylalanine. EF-hand domains lie at 8 to 43 (EQIA…LGQN), 44 to 79 (PTEA…KMKD), 81 to 116 (DSEE…LGEK), and 117 to 149 (LTDE…MMAK). Residues Asp21, Asp23, Asp25, Cys27, Glu32, Asp57, Asp59, Asn61, Thr63, Glu68, Asp94, Asp96, Asp98, and Glu105 each contribute to the Ca(2+) site. An N6,N6,N6-trimethyllysine modification is found at Lys116. Residues Asp130, Asp132, Asp134, Gln136, and Glu141 each contribute to the Ca(2+) site.

The protein belongs to the calmodulin family.

Calmodulin mediates the control of a large number of enzymes, ion channels and other proteins by Ca(2+). Among the enzymes to be stimulated by the calmodulin-Ca(2+) complex are a number of protein kinases and phosphatases. The chain is Calmodulin from Triticum aestivum (Wheat).